A 560-amino-acid polypeptide reads, in one-letter code: (E)-beta-farnesene synthase (560 aa).

Positions 312, 316, 457, and 465 each coordinate Mg(2+). The short motif at 312 to 316 (DDTFD) is the DDXXD motif element.

This sequence belongs to the terpene synthase family. The cofactor is Mg(2+). It depends on Co(2+) as a cofactor. Requires Mn(2+) as cofactor.

The protein localises to the cytoplasm. The catalysed reaction is (2E,6E)-farnesyl diphosphate = (E)-beta-farnesene + diphosphate. It participates in secondary metabolite biosynthesis; terpenoid biosynthesis. Sesquiterpene cyclase catalyzing the production of beta-farnesene from farnesyl diphosphate. The protein is (E)-beta-farnesene synthase of Citrus junos (Yuzu).